The following is a 171-amino-acid chain: Pro-corazonin (171 aa).

Positions 1–20 (MLHTRTIALLLVGLVVLVNA) are cleaved as a signal peptide. Position 21 is a pyrrolidone carboxylic acid (Gln21). The residue at position 31 (Asn31) is an Asparagine amide. A propeptide spanning residues 82–171 (FLRNPCDLRV…GFSDHRQKIA (90 aa)) is cleaved from the precursor.

The protein belongs to the corazonin family.

The protein resides in the secreted. Cardioactive peptide. Corazonin is probably involved in the physiological regulation of the heart beat. This chain is Pro-corazonin, found in Anopheles gambiae (African malaria mosquito).